The primary structure comprises 151 residues: uncharacterized protein (151 aa).

4 helical membrane passes run 22–42 (IVSI…GFFF), 62–82 (ALFI…TKII), 97–117 (LFAF…ADYF), and 121–141 (IYIP…IELA).

The protein localises to the cell membrane. This is an uncharacterized protein from Bacillus subtilis (strain 168).